Reading from the N-terminus, the 644-residue chain is Threonine--tRNA ligase (644 aa).

In terms of domain architecture, TGS spans 1 to 61; that stretch reads MPDIQLPDGS…DQDAEVAIVT (61 aa). Residues 242-535 form a catalytic region; it reads DHRRIGTELE…LIEHYEGKFP (294 aa). Zn(2+)-binding residues include cysteine 335, histidine 386, and histidine 512.

Belongs to the class-II aminoacyl-tRNA synthetase family. In terms of assembly, homodimer. Requires Zn(2+) as cofactor.

The protein resides in the cytoplasm. The enzyme catalyses tRNA(Thr) + L-threonine + ATP = L-threonyl-tRNA(Thr) + AMP + diphosphate + H(+). In terms of biological role, catalyzes the attachment of threonine to tRNA(Thr) in a two-step reaction: L-threonine is first activated by ATP to form Thr-AMP and then transferred to the acceptor end of tRNA(Thr). Also edits incorrectly charged L-seryl-tRNA(Thr). This is Threonine--tRNA ligase from Acidithiobacillus ferrooxidans (strain ATCC 23270 / DSM 14882 / CIP 104768 / NCIMB 8455) (Ferrobacillus ferrooxidans (strain ATCC 23270)).